A 282-amino-acid polypeptide reads, in one-letter code: 4-hydroxybenzoate octaprenyltransferase (282 aa).

The next 9 helical transmembrane spans lie at isoleucine 17–phenylalanine 37, isoleucine 40–isoleucine 60, alanine 90–isoleucine 110, phenylalanine 113–leucine 133, alanine 135–serine 155, phenylalanine 163–methionine 183, leucine 207–lysine 227, tryptophan 231–isoleucine 251, and alanine 262–isoleucine 282.

It belongs to the UbiA prenyltransferase family. Mg(2+) serves as cofactor.

It localises to the cell inner membrane. It catalyses the reaction all-trans-octaprenyl diphosphate + 4-hydroxybenzoate = 4-hydroxy-3-(all-trans-octaprenyl)benzoate + diphosphate. It participates in cofactor biosynthesis; ubiquinone biosynthesis. Functionally, catalyzes the prenylation of para-hydroxybenzoate (PHB) with an all-trans polyprenyl group. Mediates the second step in the final reaction sequence of ubiquinone-8 (UQ-8) biosynthesis, which is the condensation of the polyisoprenoid side chain with PHB, generating the first membrane-bound Q intermediate 3-octaprenyl-4-hydroxybenzoate. This is 4-hydroxybenzoate octaprenyltransferase from Legionella pneumophila (strain Paris).